The sequence spans 172 residues: Translocon-associated protein subunit delta (172 aa).

A signal peptide spans 1-24 (MAALASLGALALLLLSGLSCCSEA). Cys-25 and Cys-56 are disulfide-bonded. Residues 25 to 143 (CVEPQITPSY…SVDHRGTWNG (119 aa)) are Lumenal-facing. Lys-72 participates in a covalent cross-link: Glycyl lysine isopeptide (Lys-Gly) (interchain with G-Cter in ubiquitin). A helical membrane pass occupies residues 144–164 (PWVSTEVLAAAIGLVIYYLAF). Topologically, residues 165-172 (SAKSHIQA) are cytoplasmic.

Belongs to the TRAP-delta family. Heterotetramer of TRAP-alpha, TRAP-beta, TRAP-delta and TRAP-gamma.

It localises to the endoplasmic reticulum membrane. Its function is as follows. TRAP proteins are part of a complex whose function is to bind calcium to the ER membrane and thereby regulate the retention of ER resident proteins. The sequence is that of Translocon-associated protein subunit delta (SSR4) from Bos taurus (Bovine).